The sequence spans 365 residues: tRNA N6-adenosine threonylcarbamoyltransferase (365 aa).

The Fe cation site is built by H119 and H123. Substrate-binding positions include 141–145 (LVSGG), D174, G187, and N288. D316 is a Fe cation binding site.

This sequence belongs to the KAE1 / TsaD family. Fe(2+) is required as a cofactor.

The protein localises to the cytoplasm. The enzyme catalyses L-threonylcarbamoyladenylate + adenosine(37) in tRNA = N(6)-L-threonylcarbamoyladenosine(37) in tRNA + AMP + H(+). Its function is as follows. Required for the formation of a threonylcarbamoyl group on adenosine at position 37 (t(6)A37) in tRNAs that read codons beginning with adenine. Is involved in the transfer of the threonylcarbamoyl moiety of threonylcarbamoyl-AMP (TC-AMP) to the N6 group of A37, together with TsaE and TsaB. TsaD likely plays a direct catalytic role in this reaction. The protein is tRNA N6-adenosine threonylcarbamoyltransferase of Rhizobium leguminosarum bv. trifolii (strain WSM2304).